Reading from the N-terminus, the 445-residue chain is 3-phosphoshikimate 1-carboxyvinyltransferase (445 aa).

Residues K34, S35, and R39 each coordinate 3-phosphoshikimate. A phosphoenolpyruvate-binding site is contributed by K34. Phosphoenolpyruvate is bound by residues G112 and R140. 3-phosphoshikimate is bound by residues S186, S187, Q188, S216, E331, and H358. Position 188 (Q188) interacts with phosphoenolpyruvate. The Proton acceptor role is filled by E331. Positions 362, 403, and 428 each coordinate phosphoenolpyruvate.

Belongs to the EPSP synthase family. Monomer.

It localises to the cytoplasm. It carries out the reaction 3-phosphoshikimate + phosphoenolpyruvate = 5-O-(1-carboxyvinyl)-3-phosphoshikimate + phosphate. It functions in the pathway metabolic intermediate biosynthesis; chorismate biosynthesis; chorismate from D-erythrose 4-phosphate and phosphoenolpyruvate: step 6/7. Catalyzes the transfer of the enolpyruvyl moiety of phosphoenolpyruvate (PEP) to the 5-hydroxyl of shikimate-3-phosphate (S3P) to produce enolpyruvyl shikimate-3-phosphate and inorganic phosphate. In Kocuria rhizophila (strain ATCC 9341 / DSM 348 / NBRC 103217 / DC2201), this protein is 3-phosphoshikimate 1-carboxyvinyltransferase.